A 79-amino-acid polypeptide reads, in one-letter code: MKFLNVVAIALLVVACLAVYSNAAPHEGVKEVAAAKPMGITCDLLSLWKVGHAACAAHCLVLGDVGGYCTKEGLCVCKE.

An N-terminal signal peptide occupies residues 1 to 23 (MKFLNVVAIALLVVACLAVYSNA). 3 disulfides stabilise this stretch: cysteine 42–cysteine 69, cysteine 55–cysteine 75, and cysteine 59–cysteine 77.

The protein belongs to the invertebrate defensin family. Type 1 subfamily.

The protein resides in the secreted. The polypeptide is Defensin-1 (SMD1) (Stomoxys calcitrans (Stable fly)).